A 768-amino-acid polypeptide reads, in one-letter code: Solute carrier family 45 member 4 (768 aa).

Residues 1–32 form a disordered region; the sequence is MKMAPQNADPESMQVQELSVPLPDPQKAGGAE. 6 helical membrane-spanning segments follow: residues 63–83, 86–106, 123–143, 155–175, 196–216, and 233–253; these read EFCY…IGLP, YYSL…PLIG, ILAL…GSAI, PIGI…ADAT, LNIH…LGGL, and VLFF…LFSI. Disordered regions lie at residues 259–284 and 379–419; these read SPQQ…PAFP and NEAK…RHAF. Phosphoserine occurs at positions 424 and 454. Positions 460–489 are disordered; the sequence is DMQKRQRQHRHRNQSGATTSSGDTESEEGE. Over residues 473–482 the composition is skewed to low complexity; the sequence is QSGATTSSGD. S485 carries the post-translational modification Phosphoserine. The next 6 membrane-spanning stretches (helical) occupy residues 518–538, 560–580, 592–612, 614–634, 666–686, and 695–715; these read TWFS…QVIF, MGCW…ALLQ, VIYV…AMFP, VYVA…ISYC, ILSC…GGVV, and IPMV…FLVI. Residues 726-768 are disordered; sequence EQKGLSSPLAGEGRAGGNSEKPTVLKLTRKEGLQGPVETESVV. At S732 the chain carries Phosphoserine.

Belongs to the glycoside-pentoside-hexuronide (GPH) cation symporter transporter (TC 2.A.2) family.

The protein localises to the membrane. The enzyme catalyses sucrose(out) + H(+)(out) = sucrose(in) + H(+)(in). In terms of biological role, proton-associated sucrose transporter. May be able to transport also glucose and fructose. The sequence is that of Solute carrier family 45 member 4 from Homo sapiens (Human).